A 430-amino-acid polypeptide reads, in one-letter code: Microtubule-associated protein tau (430 aa).

Positions 1-16 (MAEPRQEFDTAEDHAE) are enriched in basic and acidic residues. The tract at residues 1–245 (MAEPRQEFDT…PVPMPDLKNV (245 aa)) is disordered. An N-acetylalanine modification is found at A2. Phosphotyrosine is present on Y18. Residue K31 forms a Glycyl lysine isopeptide (Lys-Gly) (interchain with G-Cter in ubiquitin) linkage. Phosphoserine is present on residues S33 and S48. Residues 48-58 (SETSDAKSTPT) show a composition bias toward polar residues. Residues T56, T58, and T98 each carry the phosphothreonine modification. Positions 117–133 (KGKEGTGSEDRKAKGAD) are enriched in basic and acidic residues. T142 is subject to Phosphothreonine. R144 is modified (omega-N-methylarginine). An N6,N6-dimethyllysine; alternate modification is found at K152. K152 carries the N6-acetyllysine; alternate modification. A phosphothreonine mark is found at T158, T164, T165, and T170. Low complexity predominate over residues 161–203 (PAKTTPSPKTPPGTGEPAKSGDRSGYSSPGSPGTPGSRSRTPS). 2 positions are modified to phosphoserine: S180 and S184. Y186 carries the phosphotyrosine modification. Phosphoserine is present on residues S187, S188, and S191. 2 positions are modified to phosphothreonine: T194 and T201. At S203 the chain carries Phosphoserine. Position 206 is a phosphothreonine (T206). K214 is modified (N6-acetyllysine). T220 is subject to Phosphothreonine. Residues S224 and S226 each carry the phosphoserine modification. Tau/MAP repeat units follow at residues 233–263 (QTAPVPMPDLKNVRSKIGSTENLKHQPGGGK), 264–294 (VQIINKKLDLSNVQSKCGSKDNIKHVPGGGS), 295–325 (VQIVYKPVDLSKVTSKCGSLGNIHHKPGGGQ), and 326–357 (VEVKSEKLDFKDRVQSKIGSLDNITHVPGGGN). A Glycyl lysine isopeptide (Lys-Gly) (interchain with G-Cter in ubiquitin) cross-link involves residue K243. Position 248 is an N6-acetyllysine; alternate (K248). K248 carries the post-translational modification N6-methyllysine; alternate. K248 participates in a covalent cross-link: Glycyl lysine isopeptide (Lys-Gly) (interchain with G-Cter in ubiquitin); alternate. The residue at position 251 (S251) is a Phosphoserine. Residue K256 forms a Glycyl lysine isopeptide (Lys-Gly) (interchain with G-Cter in ubiquitin) linkage. K270 carries the post-translational modification N6-acetyllysine; alternate. K270 is covalently cross-linked (Glycyl lysine isopeptide (Lys-Gly) (interchain with G-Cter in ubiquitin); alternate). 2 positions are modified to phosphoserine: S274 and S278. K279 is subject to N6-acetyllysine. Cysteines 280 and 311 form a disulfide. The residue at position 282 (S282) is a Phosphoserine. At K287 the chain carries N6-acetyllysine; alternate. A Glycyl lysine isopeptide (Lys-Gly) (interchain with G-Cter in ubiquitin); alternate cross-link involves residue K287. Phosphoserine is present on S294. K300 is subject to N6,N6-dimethyllysine; alternate. 3 positions are modified to N6-acetyllysine; alternate: K300, K306, and K310. Residues K300, K306, and K310 each participate in a glycyl lysine isopeptide (Lys-Gly) (interchain with G-Cter in ubiquitin); alternate cross-link. Phosphoserine is present on S313. Residues K320, K332, and K336 each carry the N6-acetyllysine; alternate modification. Residues K320, K332, and K336 each participate in a glycyl lysine isopeptide (Lys-Gly) (interchain with G-Cter in ubiquitin); alternate cross-link. Omega-N-methylarginine is present on R338. Position 341 is a phosphoserine (S341). Residue K342 forms a Glycyl lysine isopeptide (Lys-Gly) (interchain with G-Cter in ubiquitin) linkage. A Phosphoserine modification is found at S345. K358 is modified (N6-acetyllysine; alternate). K358 is covalently cross-linked (Glycyl lysine isopeptide (Lys-Gly) (interchain with G-Cter in ubiquitin); alternate). Residue K364 forms a Glycyl lysine isopeptide (Lys-Gly) (interchain with G-Cter in ubiquitin) linkage. N6-acetyllysine; alternate is present on K374. Residue K374 forms a Glycyl lysine isopeptide (Lys-Gly) (interchain with G-Cter in ubiquitin); alternate linkage. Y383 is modified (phosphotyrosine). S385 and S389 each carry phosphoserine. Residues 387–406 (VVSGDTSPRHLSNVSSTGSI) are disordered. The segment covering 390-406 (GDTSPRHLSNVSSTGSI) has biased composition (polar residues). Residue T392 is modified to Phosphothreonine. Phosphoserine is present on residues S393, S398, S405, and S411. A Phosphothreonine modification is found at T416.

As to quaternary structure, interacts with MARK1, MARK2, MARK3 and MARK4. Interacts with SQSTM1 when polyubiquitinated. Interacts with PSMC2 through SQSTM1. Interacts with FKBP4. Binds to CSNK1D. Interacts with SGK1. Interacts with PIN1. Interacts with LRRK2. Interacts with LRP1, leading to endocytosis; this interaction is reduced in the presence of LRPAP1/RAP. Polyubiquitinated. Requires functional TRAF6 and may provoke SQSTM1-dependent degradation by the proteasome. In terms of processing, phosphorylation at various serine and threonine residues in S-P or T-P motifs by proline-directed protein kinases (PDPK1, CDK1, CDK5, GSK3, MAPK) (a few sites per protein in interphase, more in mitosis), and at serine residues in K-X-G-S motifs by MAP/microtubule affinity-regulating kinase (MARK1, MARK2, MARK3 or MARK4), causing detachment from microtubules, and their disassembly. Phosphorylation at Ser-345 by BRSK1 and BRSK2 in neurons affects ability to bind microtubules and plays a role in neuron polarization. Phosphorylated by PHK. Dephosphorylation at several serine and threonine residues by the serine/threonine phosphatase PPP5C. Post-translationally, hyperphosphorylated (in particular at Thr-170, Ser-191, Thr-194, Ser-251, and Ser-345) during hibernation. Phosphorylation is fully reversible after arousal. Highly phosphorylated tau contains a number of paired helical filaments (PHFs)-like epitopes. PHF-like phosphorylation is not associated with fibril formation. Distribution of PHF-like tau is more intense in the entorhinal cortex, hippocampus and isocortical areas. PHF-like phosphorylation-dephosphorylation during hibernation cycle is synchronized with regression-re-establishment of afferentation. It may reflect a protective mechanism in an unfavorable environment.

The protein localises to the cytoplasm. It is found in the cytosol. It localises to the cell membrane. Its subcellular location is the cytoskeleton. The protein resides in the cell projection. The protein localises to the axon. It is found in the dendrite. In terms of biological role, promotes microtubule assembly and stability, and might be involved in the establishment and maintenance of neuronal polarity. The C-terminus binds axonal microtubules while the N-terminus binds neural plasma membrane components, suggesting that tau functions as a linker protein between both. Axonal polarity is predetermined by tau localization (in the neuronal cell) in the domain of the cell body defined by the centrosome. The short isoforms allow plasticity of the cytoskeleton whereas the longer isoforms may preferentially play a role in its stabilization. This Spermophilus citellus (European ground squirrel) protein is Microtubule-associated protein tau (MAPT).